Here is an 84-residue protein sequence, read N- to C-terminus: Seminal ribonuclease (84 aa).

Disulfide bonds link C10/C65, C28/C80, and C35/C42. Substrate contacts are provided by residues 11–15 (KPVNT), K36, and R55.

Belongs to the pancreatic ribonuclease family. Homodimer; disulfide-linked.

It localises to the secreted. It catalyses the reaction an [RNA] containing cytidine + H2O = an [RNA]-3'-cytidine-3'-phosphate + a 5'-hydroxy-ribonucleotide-3'-[RNA].. The enzyme catalyses an [RNA] containing uridine + H2O = an [RNA]-3'-uridine-3'-phosphate + a 5'-hydroxy-ribonucleotide-3'-[RNA].. The polypeptide is Seminal ribonuclease (SRN) (Giraffa camelopardalis (Giraffe)).